The sequence spans 116 residues: MTNAPVFGADVLARVADTLETRLPQNGGDPQTSYAAKLLAKGPDAFLKKIGEEATELVMAAKDGRPERIVSETADLWFHCLVTLAHYNLRPEDVLAELARREGLSGLEEKARRPAD.

This sequence belongs to the PRA-PH family.

Its subcellular location is the cytoplasm. The enzyme catalyses 1-(5-phospho-beta-D-ribosyl)-ATP + H2O = 1-(5-phospho-beta-D-ribosyl)-5'-AMP + diphosphate + H(+). The protein operates within amino-acid biosynthesis; L-histidine biosynthesis; L-histidine from 5-phospho-alpha-D-ribose 1-diphosphate: step 2/9. The polypeptide is Phosphoribosyl-ATP pyrophosphatase (Bordetella avium (strain 197N)).